The sequence spans 190 residues: Nucleoside triphosphate pyrophosphatase (190 aa).

D69 functions as the Proton acceptor in the catalytic mechanism.

This sequence belongs to the Maf family. A divalent metal cation serves as cofactor.

The protein resides in the cytoplasm. The enzyme catalyses a ribonucleoside 5'-triphosphate + H2O = a ribonucleoside 5'-phosphate + diphosphate + H(+). The catalysed reaction is a 2'-deoxyribonucleoside 5'-triphosphate + H2O = a 2'-deoxyribonucleoside 5'-phosphate + diphosphate + H(+). In terms of biological role, nucleoside triphosphate pyrophosphatase. May have a dual role in cell division arrest and in preventing the incorporation of modified nucleotides into cellular nucleic acids. The sequence is that of Nucleoside triphosphate pyrophosphatase from Helicobacter pylori (strain P12).